A 273-amino-acid polypeptide reads, in one-letter code: Dermonecrotic toxin LhSicTox-alphaIA2ai (273 aa).

The active site involves H5. E25 and D27 together coordinate Mg(2+). Residue H41 is the Nucleophile of the active site. 2 disulfide bridges follow: C45–C51 and C47–C190. D85 serves as a coordination point for Mg(2+).

Belongs to the arthropod phospholipase D family. Class II subfamily. The cofactor is Mg(2+). As to expression, expressed by the venom gland.

Its subcellular location is the secreted. The catalysed reaction is an N-(acyl)-sphingosylphosphocholine = an N-(acyl)-sphingosyl-1,3-cyclic phosphate + choline. It carries out the reaction an N-(acyl)-sphingosylphosphoethanolamine = an N-(acyl)-sphingosyl-1,3-cyclic phosphate + ethanolamine. The enzyme catalyses a 1-acyl-sn-glycero-3-phosphocholine = a 1-acyl-sn-glycero-2,3-cyclic phosphate + choline. It catalyses the reaction a 1-acyl-sn-glycero-3-phosphoethanolamine = a 1-acyl-sn-glycero-2,3-cyclic phosphate + ethanolamine. Functionally, dermonecrotic toxins cleave the phosphodiester linkage between the phosphate and headgroup of certain phospholipids (sphingolipid and lysolipid substrates), forming an alcohol (often choline) and a cyclic phosphate. This toxin acts on sphingomyelin (SM). It may also act on ceramide phosphoethanolamine (CPE), lysophosphatidylcholine (LPC) and lysophosphatidylethanolamine (LPE), but not on lysophosphatidylserine (LPS), and lysophosphatidylglycerol (LPG). It acts by transphosphatidylation, releasing exclusively cyclic phosphate products as second products. Induces dermonecrosis, hemolysis, increased vascular permeability, edema, inflammatory response, and platelet aggregation. This chain is Dermonecrotic toxin LhSicTox-alphaIA2ai, found in Loxosceles hirsuta (Recluse spider).